Here is a 458-residue protein sequence, read N- to C-terminus: Phosphoglucosamine mutase (458 aa).

The active-site Phosphoserine intermediate is Ser-106. The Mg(2+) site is built by Ser-106, Asp-247, Asp-249, and Asp-251. A Phosphoserine modification is found at Ser-106.

Belongs to the phosphohexose mutase family. Mg(2+) is required as a cofactor. In terms of processing, activated by phosphorylation.

The catalysed reaction is alpha-D-glucosamine 1-phosphate = D-glucosamine 6-phosphate. In terms of biological role, catalyzes the conversion of glucosamine-6-phosphate to glucosamine-1-phosphate. This chain is Phosphoglucosamine mutase, found in Chlamydia trachomatis serovar A (strain ATCC VR-571B / DSM 19440 / HAR-13).